We begin with the raw amino-acid sequence, 92 residues long: Small ribosomal subunit protein uS19c (92 aa).

The protein belongs to the universal ribosomal protein uS19 family.

It localises to the plastid. It is found in the chloroplast. Its function is as follows. Protein S19 forms a complex with S13 that binds strongly to the 16S ribosomal RNA. This chain is Small ribosomal subunit protein uS19c, found in Gracilaria tenuistipitata var. liui (Red alga).